A 151-amino-acid polypeptide reads, in one-letter code: Putative pre-16S rRNA nuclease (151 aa).

This sequence belongs to the YqgF nuclease family.

The protein localises to the cytoplasm. Its function is as follows. Could be a nuclease involved in processing of the 5'-end of pre-16S rRNA. The protein is Putative pre-16S rRNA nuclease of Thermosynechococcus vestitus (strain NIES-2133 / IAM M-273 / BP-1).